Here is a 305-residue protein sequence, read N- to C-terminus: Methionyl-tRNA formyltransferase (305 aa).

A (6S)-5,6,7,8-tetrahydrofolate-binding site is contributed by 108 to 111; that stretch reads SLLP.

Belongs to the Fmt family.

The catalysed reaction is L-methionyl-tRNA(fMet) + (6R)-10-formyltetrahydrofolate = N-formyl-L-methionyl-tRNA(fMet) + (6S)-5,6,7,8-tetrahydrofolate + H(+). Functionally, attaches a formyl group to the free amino group of methionyl-tRNA(fMet). The formyl group appears to play a dual role in the initiator identity of N-formylmethionyl-tRNA by promoting its recognition by IF2 and preventing the misappropriation of this tRNA by the elongation apparatus. The polypeptide is Methionyl-tRNA formyltransferase (Thermus thermophilus (strain ATCC BAA-163 / DSM 7039 / HB27)).